Consider the following 564-residue polypeptide: Oxalyl-CoA decarboxylase (564 aa).

Residues I32 and Y118 each contribute to the substrate site. Residues R158 and K220 each contribute to the ADP site. Residue 261 to 265 participates in substrate binding; the sequence is AAARS. ADP is bound by residues R280, D302, and I322. Substrate is bound at residue N355. Thiamine diphosphate contacts are provided by residues Y372 and 396-398; that span reads ANT. A substrate-binding site is contributed by 403 to 404; it reads RN. 421–423 lines the thiamine diphosphate pocket; the sequence is GVM. Residue D447 coordinates Mg(2+). Residue 448-449 coordinates thiamine diphosphate; the sequence is SA. N474 and G476 together coordinate Mg(2+). Residue Y478 coordinates thiamine diphosphate. 550 to 552 contributes to the substrate binding site; the sequence is SGH.

It belongs to the TPP enzyme family. As to quaternary structure, homotetramer; dimer of dimers. Mg(2+) is required as a cofactor. Requires thiamine diphosphate as cofactor.

It carries out the reaction oxalyl-CoA + H(+) = formyl-CoA + CO2. It functions in the pathway metabolic intermediate degradation; oxalate degradation; CO(2) and formate from oxalate: step 2/2. Involved in the catabolism of oxalate and in the adapatation to low pH via the induction of the oxalate-dependent acid tolerance response (ATR). Catalyzes the decarboxylation of oxalyl-CoA to yield carbon dioxide and formyl-CoA. This is Oxalyl-CoA decarboxylase (oxc) from Escherichia coli O157:H7.